The primary structure comprises 203 residues: 22.3 kDa class VI heat shock protein (203 aa).

In terms of domain architecture, sHSP spans 86 to 203 (ALRRGARTTV…DAHQAAAATA (118 aa)).

Belongs to the small heat shock protein (HSP20) family. May form oligomeric structures.

It localises to the cytoplasm. This Oryza sativa subsp. japonica (Rice) protein is 22.3 kDa class VI heat shock protein (HSP22.3).